Consider the following 633-residue polypeptide: Kelch repeat and BTB domain-containing protein 11 (633 aa).

The disordered stretch occupies residues 1-118; that stretch reads MENSVAPFVL…EDPPSRHEHA (118 aa). Residues 35–60 are compositionally biased toward polar residues; the sequence is STAQTPCSLSASLCFSSGDDSPPQSR. The span at 61–73 shows a compositional bias: low complexity; sequence ASAAEGSEASPPS. Phosphoserine is present on residues S70, S73, S92, S95, S107, and S113. Positions 146–206 constitute a BTB domain; sequence PDLVIEVAGR…AYSGRMAGVR (61 aa). 4 Kelch repeats span residues 317 to 365, 366 to 418, 419 to 463, and 465 to 506; these read RPQS…VLFN, YLFL…ALDG, HLYA…TCNG, and IYVS…ALDG.

The protein is Kelch repeat and BTB domain-containing protein 11 (Kbtbd11) of Mus musculus (Mouse).